Here is a 340-residue protein sequence, read N- to C-terminus: Complement decay-accelerating factor (340 aa).

Sushi domains follow at residues 1–55, 56–119, 120–181, and 182–244; these read VPNA…FCNR, SCEV…FCKK, KSCP…ECRE, and IYCP…ECRG. The cysteines at positions 24 and 53 are disulfide-linked. N-linked (GlcNAc...) asparagine glycosylation is present at N54. 6 disulfides stabilise this stretch: C57–C104, C88–C117, C122–C163, C149–C179, C184–C226, and C212–C242. An N-linked (GlcNAc...) asparagine glycan is attached at N107. Residues 235–317 are disordered; the sequence is WSGPPPECRG…SGTTSGTTSL (83 aa). A compositionally biased stretch (polar residues) spans 246-268; it reads SLTSKVPPTVQKPTTVNVPTTEV. Composition is skewed to low complexity over residues 269-287 and 307-317; these read SPTS…AQAT and GSGTTSGTTSL. A lipid anchor (GPI-anchor amidated serine) is attached at S312. Positions 313 to 340 are cleaved as a propeptide — removed in mature form; the sequence is GTTSLLSGHKCFTLTGLLGTLVTMGLLT.

Belongs to the receptors of complement activation (RCA) family. Monomer (major form) and non-disulfide-linked, covalent homodimer (minor form). Interacts with ADGRE5. In terms of processing, the Ser/Thr-rich domain is heavily O-glycosylated.

Its subcellular location is the cell membrane. This protein recognizes C4b and C3b fragments that condense with cell-surface hydroxyl or amino groups when nascent C4b and C3b are locally generated during C4 and c3 activation. Interaction of daf with cell-associated C4b and C3b polypeptides interferes with their ability to catalyze the conversion of C2 and factor B to enzymatically active C2a and Bb and thereby prevents the formation of C4b2a and C3bBb, the amplification convertases of the complement cascade. Inhibits complement activation by destabilizing and preventing the formation of C3 and C5 convertases, which prevents complement damage. The polypeptide is Complement decay-accelerating factor (CD55) (Pongo pygmaeus (Bornean orangutan)).